A 72-amino-acid chain; its full sequence is uncharacterized protein (72 aa).

This is an uncharacterized protein from Vertebrata (FPV).